Consider the following 285-residue polypeptide: 4-diphosphocytidyl-2-C-methyl-D-erythritol kinase (285 aa).

Residue K14 is part of the active site. 97 to 107 (PMGGGIGGGSS) is an ATP binding site. The active site involves D139.

Belongs to the GHMP kinase family. IspE subfamily.

The enzyme catalyses 4-CDP-2-C-methyl-D-erythritol + ATP = 4-CDP-2-C-methyl-D-erythritol 2-phosphate + ADP + H(+). It participates in isoprenoid biosynthesis; isopentenyl diphosphate biosynthesis via DXP pathway; isopentenyl diphosphate from 1-deoxy-D-xylulose 5-phosphate: step 3/6. Functionally, catalyzes the phosphorylation of the position 2 hydroxy group of 4-diphosphocytidyl-2C-methyl-D-erythritol. The protein is 4-diphosphocytidyl-2-C-methyl-D-erythritol kinase of Tolumonas auensis (strain DSM 9187 / NBRC 110442 / TA 4).